A 117-amino-acid chain; its full sequence is MEFGLSWVFLAGILKGVQCEVQLVESGGGLVQPGGSLRLSCAASGFTFSNSDMNWARKAPGKGLEWVSGVSWNGSRTHYVDSVKRRFIISRDNSRNSLYLQKNRRRAEDMAVYYCVR.

An N-terminal signal peptide occupies residues 1–19 (MEFGLSWVFLAGILKGVQC). The interval 20–44 (EVQLVESGGGLVQPGGSLRLSCAAS) is framework-1. One can recognise an Ig-like domain in the interval 21–117 (VQLVESGGGL…EDMAVYYCVR (97 aa)). Cys41 and Cys115 form a disulfide bridge. Positions 45-52 (GFTFSNSD) are complementarity-determining-1. The framework-2 stretch occupies residues 53 to 69 (MNWARKAPGKGLEWVSG). Residues 70–77 (VSWNGSRT) are complementarity-determining-2. Residue Asn73 is glycosylated (N-linked (GlcNAc...) asparagine). Residues 78 to 115 (HYVDSVKRRFIISRDNSRNSLYLQKNRRRAEDMAVYYC) are framework-3. The complementarity-determining-3 stretch occupies residues 116 to 117 (VR).

In terms of assembly, immunoglobulins are composed of two identical heavy chains and two identical light chains; disulfide-linked.

Its subcellular location is the secreted. It localises to the cell membrane. Functionally, probable non-functional open reading frame (ORF) of V region of the variable domain of immunoglobulin heavy chains. Non-functional ORF generally cannot participate in the synthesis of a productive immunoglobulin chain due to altered V-(D)-J or switch recombination and/or splicing site (at mRNA level) and/or conserved amino acid change (protein level). Immunoglobulins, also known as antibodies, are membrane-bound or secreted glycoproteins produced by B lymphocytes. In the recognition phase of humoral immunity, the membrane-bound immunoglobulins serve as receptors which, upon binding of a specific antigen, trigger the clonal expansion and differentiation of B lymphocytes into immunoglobulins-secreting plasma cells. Secreted immunoglobulins mediate the effector phase of humoral immunity, which results in the elimination of bound antigens. The antigen binding site is formed by the variable domain of one heavy chain, together with that of its associated light chain. Thus, each immunoglobulin has two antigen binding sites with remarkable affinity for a particular antigen. The variable domains are assembled by a process called V-(D)-J rearrangement and can then be subjected to somatic hypermutations which, after exposure to antigen and selection, allow affinity maturation for a particular antigen. The polypeptide is Probable non-functional immunoglobulin heavy variable 3-16 (Homo sapiens (Human)).